Reading from the N-terminus, the 691-residue chain is Protein simr-1 (691 aa).

A Tudor; degenerate domain is found at 139 to 204 (EAEITPGTIY…TLFHLGKFTI (66 aa)). 2 disordered regions span residues 547–573 (TGPCGSNTSRPTAQNTANSSINQDMSI) and 588–618 (DNLNDTENWPNSEREQSATEMESGAEATTNS). Composition is skewed to polar residues over residues 549-573 (PCGSNTSRPTAQNTANSSINQDMSI) and 588-598 (DNLNDTENWPN).

It is found in the cytoplasm. Its subcellular location is the perinuclear region. In terms of biological role, acts downstream of piRNA production to promote mediator complex-dependent endogenous siRNA biogenesis from piRNA-target mRNAs in the RNA interference pathway in germ cells. Not required to identify target mRNA by the piRNA pathway. Plays a role in both spermatogenesis and oogenesis and in maintaining fertility over multiple generations, probably by directing mutator-dependent silencing to piRNA-targeted genes. The chain is Protein simr-1 from Caenorhabditis elegans.